A 1571-amino-acid polypeptide reads, in one-letter code: Phosphatidylinositol 3-kinase 1 (1571 aa).

Positions 1 to 73 are enriched in low complexity; the sequence is MNSIESSSND…NNDNNNNNNN (73 aa). Disordered stretches follow at residues 1-119, 157-195, and 283-430; these read MNSI…HVNN, GYDV…RTRN, and NSKL…IIKR. Basic and acidic residues predominate over residues 74–85; that stretch reads IDKKRKDSKNKQ. Low complexity predominate over residues 101-119; it reads NSNDSNCSSGSSSGGHVNN. Basic and acidic residues predominate over residues 283-292; the sequence is NSKLDTEEKP. Low complexity predominate over residues 294-324; sequence TTTTTTTTTSTSISTSTPTTTTTTTTNTSTT. The span at 325 to 337 shows a compositional bias: polar residues; it reads NDITIKPKTSPTK. Low complexity-rich tracts occupy residues 360 to 382 and 405 to 424; these read KVST…PTGK and NNTN…NNNN. Residues 530–627 form the PI3K-ABD domain; it reads IKTSFNILFL…IPKLKVIEKS (98 aa). The 90-residue stretch at 700-789 folds into the PI3K-RBD domain; the sequence is GNKILISIFL…GTKPQLTLIQ (90 aa). The 170-residue stretch at 851–1020 folds into the C2 PI3K-type domain; that stretch reads IKKPFRVKVM…GLTLEFEEFN (170 aa). A PIK helical domain is found at 1040–1216; it reads QPPTNINSNE…GILLESYLYA (177 aa). The region spanning 1280-1558 is the PI3K/PI4K catalytic domain; sequence IINKSKYMDS…LIHESLATKT (279 aa). Residues 1286–1292 form a G-loop region; sequence YMDSKKL. Residues 1424 to 1432 form a catalytic loop region; that stretch reads GIGDRHNDN. The segment at 1443–1469 is activation loop; that stretch reads HIDFGHFLGNYKKKFGFKRERAPFVFT.

It belongs to the PI3/PI4-kinase family.

The catalysed reaction is a 1,2-diacyl-sn-glycero-3-phospho-(1D-myo-inositol) + ATP = a 1,2-diacyl-sn-glycero-3-phospho-(1D-myo-inositol-3-phosphate) + ADP + H(+). This is Phosphatidylinositol 3-kinase 1 (pikA) from Dictyostelium discoideum (Social amoeba).